The primary structure comprises 167 residues: Phosphopantetheine adenylyltransferase (167 aa).

Ser-10 contributes to the substrate binding site. Residues 10–11 (SF) and His-18 each bind ATP. Positions 42, 79, and 93 each coordinate substrate. ATP contacts are provided by residues 94-96 (GLR), Glu-104, and 129-135 (VRHITAT).

Belongs to the bacterial CoaD family. In terms of assembly, homohexamer. Mg(2+) serves as cofactor.

The protein resides in the cytoplasm. The enzyme catalyses (R)-4'-phosphopantetheine + ATP + H(+) = 3'-dephospho-CoA + diphosphate. The protein operates within cofactor biosynthesis; coenzyme A biosynthesis; CoA from (R)-pantothenate: step 4/5. Functionally, reversibly transfers an adenylyl group from ATP to 4'-phosphopantetheine, yielding dephospho-CoA (dPCoA) and pyrophosphate. In Beijerinckia indica subsp. indica (strain ATCC 9039 / DSM 1715 / NCIMB 8712), this protein is Phosphopantetheine adenylyltransferase.